The sequence spans 221 residues: CDC5 pindle pole body anchor protein 1 (221 aa).

Residues 142-221 form a disordered region; it reads KNIERDNLKP…PTEDSVPHAE (80 aa). Phosphoserine occurs at positions 158, 170, and 175. Residues 165-170 carry the CDC5-binding motif; that stretch reads PLVTSS. The span at 166 to 188 shows a compositional bias: polar residues; that stretch reads LVTSSPIHMSPLQSRQRPVSSLQ. Residues 189-195 carry the CLB3-docking motif; the sequence is PPKGPNF. The CDC14-binding motif lies at 200–202; the sequence is PKL.

As to quaternary structure, interacts with CDC5 and CDC14. Post-translationally, phosphorylated by CLB3-CDK1 in metaphase which is required for correct localization at the nuclear envelop and the spindle pole body, and dephosphorylated by CDC14 in early anaphase.

Its subcellular location is the nucleus membrane. The protein resides in the cytoplasm. The protein localises to the cytoskeleton. It localises to the microtubule organizing center. It is found in the spindle pole body. Its function is as follows. Specialized component of the nuclear membrane that may be involved in the connection of the spindle pole body (SPB) to the nuclear envelope. Recruits CDC5 to spindle pole bodies in metaphase. The chain is CDC5 pindle pole body anchor protein 1 from Saccharomyces cerevisiae (strain ATCC 204508 / S288c) (Baker's yeast).